We begin with the raw amino-acid sequence, 163 residues long: Superoxide dismutase [Mn] (163 aa).

Mn(2+) is bound by residues His-2, His-50, Asp-134, and His-138.

This sequence belongs to the iron/manganese superoxide dismutase family. Mn(2+) serves as cofactor.

The enzyme catalyses 2 superoxide + 2 H(+) = H2O2 + O2. Destroys superoxide anion radicals which are normally produced within the cells and which are toxic to biological systems. The sequence is that of Superoxide dismutase [Mn] (sodA) from Mycobacterium kansasii.